We begin with the raw amino-acid sequence, 126 residues long: Aspartate 1-decarboxylase (126 aa).

The active-site Schiff-base intermediate with substrate; via pyruvic acid is the serine 25. Serine 25 carries the post-translational modification Pyruvic acid (Ser). Position 57 (threonine 57) interacts with substrate. The active-site Proton donor is tyrosine 58. Glycine 73–alanine 75 lines the substrate pocket.

It belongs to the PanD family. In terms of assembly, heterooctamer of four alpha and four beta subunits. The cofactor is pyruvate. Is synthesized initially as an inactive proenzyme, which is activated by self-cleavage at a specific serine bond to produce a beta-subunit with a hydroxyl group at its C-terminus and an alpha-subunit with a pyruvoyl group at its N-terminus.

The protein localises to the cytoplasm. The catalysed reaction is L-aspartate + H(+) = beta-alanine + CO2. It functions in the pathway cofactor biosynthesis; (R)-pantothenate biosynthesis; beta-alanine from L-aspartate: step 1/1. Its function is as follows. Catalyzes the pyruvoyl-dependent decarboxylation of aspartate to produce beta-alanine. In Acidovorax ebreus (strain TPSY) (Diaphorobacter sp. (strain TPSY)), this protein is Aspartate 1-decarboxylase.